The chain runs to 778 residues: Probable potassium transporter 13 (778 aa).

Residues 1–28 (MDVEGGGGGGGGAPPRGRNSWGWQKGTL) are Cytoplasmic-facing. The chain crosses the membrane as a helical span at residues 29–49 (LLAYQSFGVVYGDLCISPVYV). Topologically, residues 50–72 (YKNTFSGKLRLHEEDEEILGVLS) are extracellular. The helical transmembrane segment at 73–93 (LVFWSLTLIPLLKYIILVLGA) threads the bilayer. Residues 94 to 156 (DDNGEGGTFA…AFFEKHYSLR (63 aa)) are Cytoplasmic-facing. The helical transmembrane segment at 157-177 (VVLLLFVLMGTSMVIGDGVLT) threads the bilayer. The Extracellular segment spans residues 178-199 (PTMSVLAAVSGLRIKFPELHEN). The N-linked (GlcNAc...) asparagine glycan is linked to Asn199. Residues 200–220 (YTVLLACVILIGLFALQHYGT) form a helical membrane-spanning segment. At 221–222 (RR) the chain is on the cytoplasmic side. The chain crosses the membrane as a helical span at residues 223-243 (VGFLFAPILISWLTCIGGIGI). At 244-276 (YNIIKWNPSVIRALSPYYIYNFFRKAGKDGWSS) the chain is on the extracellular side. A helical transmembrane segment spans residues 277-297 (LGGIVLCLTGAEAMFADLGHF). The Cytoplasmic portion of the chain corresponds to 298–303 (SKLSLR). The chain crosses the membrane as a helical span at residues 304-324 (LGFTIVVYPCLVLAYMGEAAY). Residues 325–343 (LSKHREDLQSSFYKALPDR) lie on the Extracellular side of the membrane. A helical membrane pass occupies residues 344-364 (VFWPVLFIATLATAVGSQAII). The Cytoplasmic segment spans residues 365–395 (SATFSIISQCRALGCFPRIKVVHTSSHVHGQ). Residues 396-416 (IYIPEVNWVLMSLCLAVTIGF) traverse the membrane as a helical segment. Topologically, residues 417–424 (RDTEMIGN) are extracellular. A helical transmembrane segment spans residues 425–445 (AYGLAVILVMCATTCLMFLVI). Topologically, residues 446–451 (TTVWNR) are cytoplasmic. Residues 452-472 (WVVWAAAFTVVFGSVELLYLS) form a helical membrane-spanning segment. The Extracellular portion of the chain corresponds to 473-477 (ACLAK). Residues 478–498 (VPHGGWLPLLLSLTTLLVMST) traverse the membrane as a helical segment. Residues 499–778 (WHYGTAMKQQ…LIEVGMAYRV (280 aa)) are Cytoplasmic-facing. Polar residues predominate over residues 655–677 (PATSSSGGSNQHAFDAGTTTSSC). Positions 655 to 704 (PATSSSGGSNQHAFDAGTTTSSCEIDATAGGGGRRKVRFDNDGGGGGEEE) are disordered.

The protein belongs to the HAK/KUP transporter (TC 2.A.72.3) family.

It localises to the membrane. In terms of biological role, high-affinity potassium transporter. The polypeptide is Probable potassium transporter 13 (HAK13) (Oryza sativa subsp. japonica (Rice)).